We begin with the raw amino-acid sequence, 618 residues long: UvrABC system protein C (618 aa).

The GIY-YIG domain maps to 15-93; the sequence is RTPGVYLMKD…IKEHHPRYNI (79 aa). The UVR domain occupies 203-238; it reads NNLLRELRERMKMAAEQMNYEEAAFLRDRIRAIEET.

Belongs to the UvrC family. As to quaternary structure, interacts with UvrB in an incision complex.

The protein localises to the cytoplasm. Its function is as follows. The UvrABC repair system catalyzes the recognition and processing of DNA lesions. UvrC both incises the 5' and 3' sides of the lesion. The N-terminal half is responsible for the 3' incision and the C-terminal half is responsible for the 5' incision. The polypeptide is UvrABC system protein C (Syntrophus aciditrophicus (strain SB)).